The following is a 305-amino-acid chain: Protein FdhE homolog (305 aa).

It belongs to the FdhE family.

It is found in the cytoplasm. In terms of biological role, necessary for formate dehydrogenase activity. This Stutzerimonas stutzeri (strain A1501) (Pseudomonas stutzeri) protein is Protein FdhE homolog.